The sequence spans 433 residues: Dihydroorotase (433 aa).

Residues histidine 63 and histidine 65 each contribute to the Zn(2+) site. Residues 65-67 and asparagine 97 each bind substrate; that span reads HLR. Zn(2+) contacts are provided by aspartate 155, histidine 182, and histidine 235. Asparagine 283 contacts substrate. Residue aspartate 310 coordinates Zn(2+). Aspartate 310 is an active-site residue. Residue histidine 314 coordinates substrate.

The protein belongs to the metallo-dependent hydrolases superfamily. DHOase family. Class I DHOase subfamily. The cofactor is Zn(2+).

The enzyme catalyses (S)-dihydroorotate + H2O = N-carbamoyl-L-aspartate + H(+). It participates in pyrimidine metabolism; UMP biosynthesis via de novo pathway; (S)-dihydroorotate from bicarbonate: step 3/3. Catalyzes the reversible cyclization of carbamoyl aspartate to dihydroorotate. The polypeptide is Dihydroorotase (Anaeromyxobacter dehalogenans (strain 2CP-1 / ATCC BAA-258)).